The sequence spans 135 residues: Large ribosomal subunit protein uL16 (135 aa).

The protein belongs to the universal ribosomal protein uL16 family. As to quaternary structure, part of the 50S ribosomal subunit.

Binds 23S rRNA and is also seen to make contacts with the A and possibly P site tRNAs. The sequence is that of Large ribosomal subunit protein uL16 (rplP) from Carsonella ruddii (strain PV).